A 528-amino-acid polypeptide reads, in one-letter code: Exodeoxyribonuclease 7 large subunit (528 aa).

The disordered stretch occupies residues 486–528 (QGDRDAVIDGESSGVLPPSAAPAPTRPTPRPKPASSSDQGSLF). Positions 504 to 517 (SAAPAPTRPTPRPK) are enriched in pro residues.

The protein belongs to the XseA family. In terms of assembly, heterooligomer composed of large and small subunits.

It localises to the cytoplasm. It carries out the reaction Exonucleolytic cleavage in either 5'- to 3'- or 3'- to 5'-direction to yield nucleoside 5'-phosphates.. Functionally, bidirectionally degrades single-stranded DNA into large acid-insoluble oligonucleotides, which are then degraded further into small acid-soluble oligonucleotides. The sequence is that of Exodeoxyribonuclease 7 large subunit from Caulobacter sp. (strain K31).